Consider the following 427-residue polypeptide: MTYQHIYNIIKKKAYFDAHQAVLIAVSGGVDSMNLLHFLHAFQAKLQIRIGIAHVNHKQRPESDDEEAYLRSWAKKHAIPIYVAYFQGAFSENAARHLRYQFFEEIMQQEHYSALVTAHHADDQAETILMRLIRGSRLRHLAGIREVQPFANGQLIRPFLTVSKAELPNPFHFEDHSNDSMAYFRNRVRHHYLPDFKRENPQATQSLIDLSAESRLLLQAFDDLTKGLEFHRLNCFLAQSAAVQFFLLQHYLETFPQLAIKKSQFDDLLHIIRRQKQGIYPIKNTYCLLIEKESFAIKKIIPKTDLNREFKMVSYGDSLNYRGYRFVFSGSLTDKGHDIAIPLYSLSPVTLRHRQAGDRLFLGEFSKKLRRLFIDGKFTSEQRQNAIVGEQAGVIIFVLVGDETYLRKASKHDIMLAKLYIDKLEKR.

Residue 27–32 (SGGVDS) participates in ATP binding.

The protein belongs to the tRNA(Ile)-lysidine synthase family.

The protein localises to the cytoplasm. It carries out the reaction cytidine(34) in tRNA(Ile2) + L-lysine + ATP = lysidine(34) in tRNA(Ile2) + AMP + diphosphate + H(+). In terms of biological role, ligates lysine onto the cytidine present at position 34 of the AUA codon-specific tRNA(Ile) that contains the anticodon CAU, in an ATP-dependent manner. Cytidine is converted to lysidine, thus changing the amino acid specificity of the tRNA from methionine to isoleucine. The polypeptide is tRNA(Ile)-lysidine synthase (Streptococcus equi subsp. equi (strain 4047)).